The sequence spans 858 residues: MLRTKDLIWTLFFLGTAVSLQVDIVPSQGEISVGESKFFLCQVAGDAKDKDISWFSPNGEKLSPNQQRISVVWNDDDSSTLTIYNANIDDAGIYKCVVTAEDGTQSEATVNVKIFQKLMFKNAPTPQEFKEGEDAVIVCDVVSSLPPTIIWKHKGRDVILKKDVRFIVLSNNYLQIRGIKKTDEGTYRCEGRILARGEINFKDIQVIVNVPPTVQARQSIVNATANLGQSVTLVCDADGFPEPTMSWTKDGEPIENEEEDDEKHIFSDDSSELTIRNVDKNDEAEYVCIAENKAGEQDASIHLKVFAKPKITYVENQTAMELEEQVTLTCEASGDPIPSITWRTSTRNISSEEKASWTRPEKQETLDGHMVVRSHARVSSLTLKSIQYTDAGEYICTASNTIGQDSQSMYLEVQYAPKLQGPVAVYTWEGNQVNITCEVFAYPSATISWFRDGQLLPSSNYSNIKIYNTPSASYLEVTPDSENDFGNYNCTAVNRIGQESLEFILVQADTPSSPSIDRVEPYSSTAQVQFDEPEATGGVPILKYKAEWKSLGEEAWHSKWYDAKEANMEGIVTIMGLKPETRYAVRLAALNGKGLGEISAATEFKTQPVREPSAPKLEGQMGEDGNSIKVNLIKQDDGGSPIRHYLVKYRALASEWKPEIRLPSGSDHVMLKSLDWNAEYEVYVVAENQQGKSKAAHFVFRTSAQPTAIPANGSPTAGLSTGAIVGILIVIFVLLLVVMDITCYFLNKCGLLMCIAVNLCGKAGPGAKGKDMEEGKAAFSKDESKEPIVEVRTEEERTPNHDGGKHTEPNETTPLTEPEKGPVETKSEPQESEAKPAPTEVKTVPNEATQTKENESKA.

The signal sequence occupies residues 1-19; sequence MLRTKDLIWTLFFLGTAVS. 5 Ig-like C2-type domains span residues 20–111, 116–205, 212–302, 309–414, and 417–502; these read LQVD…ATVN, QKLM…KDIQ, PTVQ…ASIH, PKIT…LEVQ, and PKLQ…ESLE. Topologically, residues 20–721 are extracellular; the sequence is LQVDIVPSQG…NGSPTAGLST (702 aa). Disulfide bonds link Cys-41/Cys-96 and Cys-139/Cys-189. Residues 152–156 and 161–165 each bind heparin; these read KHKGR and KKDVR. Residue Asn-222 is glycosylated (N-linked (GlcNAc...) asparagine). Residues Cys-235 and Cys-288 are joined by a disulfide bond. N-linked (GlcNAc...) asparagine glycosylation is found at Asn-316, Asn-348, Asn-434, Asn-460, and Asn-489. A disulfide bridge links Cys-330 with Cys-396. The cysteines at positions 437 and 490 are disulfide-linked. Fibronectin type-III domains lie at 510–609 and 611–706; these read TPSS…TQPV and EPSA…SAQP. The chain crosses the membrane as a helical span at residues 722-739; sequence GAIVGILIVIFVLLLVVM. Residues 740 to 858 are Cytoplasmic-facing; that stretch reads DITCYFLNKC…TQTKENESKA (119 aa). A disordered region spans residues 765 to 858; that stretch reads PGAKGKDMEE…TQTKENESKA (94 aa). Composition is skewed to basic and acidic residues over residues 768-809 and 817-834; these read KGKD…HTEP and EPEK…ESEA. Phosphoserine is present on residues Ser-780 and Ser-784.

In terms of assembly, interacts with MDK. Found in a complex with SLC39A6, SLC39A10 and with NCAM1; this complex controls NCAM1 phosphorylation and integration into focal adhesion complexes during epithelial-tomesenchymal transition. Interacts with synaptic plasticity regulator PANTS. Polysialylated by ST8SIA2 and ST8SIA4. Polysialylation modulates cell interactions by confering both attractive and repulsive properties that are highly regulated by ST8SIA2 and ST8SIA4. Polysialylation is formed on a-2,3-linked sialic acid of core glycans.

It is found in the cell membrane. This protein is a cell adhesion molecule involved in neuron-neuron adhesion, neurite fasciculation, outgrowth of neurites, etc. In Rattus norvegicus (Rat), this protein is Neural cell adhesion molecule 1.